Consider the following 265-residue polypeptide: Glutamate racemase (265 aa).

Substrate-binding positions include 10–11 (DS) and 42–43 (YG). The active-site Proton donor/acceptor is cysteine 73. 74–75 (NT) contacts substrate. The active-site Proton donor/acceptor is cysteine 183. 184 to 185 (TH) serves as a coordination point for substrate.

The protein belongs to the aspartate/glutamate racemases family.

It catalyses the reaction L-glutamate = D-glutamate. It participates in cell wall biogenesis; peptidoglycan biosynthesis. In terms of biological role, provides the (R)-glutamate required for cell wall biosynthesis. The protein is Glutamate racemase of Corynebacterium diphtheriae (strain ATCC 700971 / NCTC 13129 / Biotype gravis).